Here is a 793-residue protein sequence, read N- to C-terminus: Signal transducer and activator of transcription 5A (793 aa).

Tyrosine 90 is subject to Phosphotyrosine. A Phosphoserine modification is found at serine 128. An SH2 domain is found at 589-686 (WNDGAILGFV…EVFAKYYTPV (98 aa)). A Phosphotyrosine modification is found at tyrosine 682. Tyrosine 694 carries the post-translational modification Phosphotyrosine; by JAK2. The segment at 772 to 793 (DSLDPRLSPPAGLFTSARSSLS) is disordered. Serine 779 is modified (phosphoserine).

The protein belongs to the transcription factor STAT family. As to quaternary structure, forms a homodimer or a heterodimer with a related family member. Binds NR3C1. Interacts with NCOA1 and SOCS7. Interacts with ERBB4. Interacts with EBF4. In terms of processing, ISGylated. Tyrosine phosphorylated in response to KITLG/SCF, IL2, IL3, IL7, IL15, CSF2/GMCSF, GH1, PRL, EPO and THPO. Activated KIT promotes phosphorylation on tyrosine residues and subsequent translocation to the nucleus. Tyrosine phosphorylated in response to constitutively activated FGFR1, FGFR2, FGFR3 and FGFR4. Tyrosine phosphorylation is required for DNA-binding activity and dimerization. Serine phosphorylation is also required for maximal transcriptional activity. Tyrosine phosphorylated in response to signaling via activated FLT3; wild-type FLT3 results in much weaker phosphorylation than constitutively activated mutant FLT3. Alternatively, can be phosphorylated by JAK2 at Tyr-694. Expressed in heart, lung, and weakly in muscle.

Its subcellular location is the cytoplasm. It localises to the nucleus. Its function is as follows. Carries out a dual function: signal transduction and activation of transcription. Mediates cellular responses to the cytokine KITLG/SCF and other growth factors. May mediate cellular responses to activated FGFR1, FGFR2, FGFR3 and FGFR4. Binds to the GAS element and activates PRL-induced transcription. Regulates the expression of milk proteins during lactation. This Rattus norvegicus (Rat) protein is Signal transducer and activator of transcription 5A (Stat5a).